We begin with the raw amino-acid sequence, 512 residues long: Histidine ammonia-lyase (512 aa).

The segment at residues 143–145 is a cross-link (5-imidazolinone (Cys-Gly)); the sequence is CSG. S144 is modified (2,3-didehydroalanine (Ser)).

The protein belongs to the PAL/histidase family. Post-translationally, contains an active site 4-methylidene-imidazol-5-one (MIO), which is formed autocatalytically by cyclization and dehydration of residues Cys-Ser-Gly.

The protein resides in the cytoplasm. The enzyme catalyses L-histidine = trans-urocanate + NH4(+). It participates in amino-acid degradation; L-histidine degradation into L-glutamate; N-formimidoyl-L-glutamate from L-histidine: step 1/3. The polypeptide is Histidine ammonia-lyase (Streptomyces avermitilis (strain ATCC 31267 / DSM 46492 / JCM 5070 / NBRC 14893 / NCIMB 12804 / NRRL 8165 / MA-4680)).